A 427-amino-acid polypeptide reads, in one-letter code: Glutamate-1-semialdehyde 2,1-aminomutase (427 aa).

Lysine 265 is subject to N6-(pyridoxal phosphate)lysine.

Belongs to the class-III pyridoxal-phosphate-dependent aminotransferase family. HemL subfamily. Homodimer. The cofactor is pyridoxal 5'-phosphate.

Its subcellular location is the cytoplasm. It catalyses the reaction (S)-4-amino-5-oxopentanoate = 5-aminolevulinate. It participates in porphyrin-containing compound metabolism; protoporphyrin-IX biosynthesis; 5-aminolevulinate from L-glutamyl-tRNA(Glu): step 2/2. This Actinobacillus succinogenes (strain ATCC 55618 / DSM 22257 / CCUG 43843 / 130Z) protein is Glutamate-1-semialdehyde 2,1-aminomutase.